Consider the following 451-residue polypeptide: Phosphoglucosamine mutase (451 aa).

The active-site Phosphoserine intermediate is the S102. Positions 102, 243, 245, and 247 each coordinate Mg(2+). A Phosphoserine modification is found at S102.

It belongs to the phosphohexose mutase family. Mg(2+) is required as a cofactor. Activated by phosphorylation.

The enzyme catalyses alpha-D-glucosamine 1-phosphate = D-glucosamine 6-phosphate. Its function is as follows. Catalyzes the conversion of glucosamine-6-phosphate to glucosamine-1-phosphate. In Salinispora arenicola (strain CNS-205), this protein is Phosphoglucosamine mutase.